We begin with the raw amino-acid sequence, 154 residues long: Toxin YhaV (154 aa).

In terms of assembly, homohexamer; forms a complex with PrlF (SohA) with stoichiometry PrlF(2)-YhaV(4), possibly as a YhaV(2)-PrlF(2)-YhaV(2) complex like the MazFE complex. May dimerize in solution.

Its function is as follows. Toxic component of a type II toxin-antitoxin (TA) system. Has RNase activity in vitro. Acts as a transcription factor. The YhaV/PrlF complex binds the prlF-yhaV operon, probably negatively regulating its expression. The sequence is that of Toxin YhaV (yhaV) from Escherichia coli O157:H7.